We begin with the raw amino-acid sequence, 179 residues long: Large ribosomal subunit protein uL5 (179 aa).

Belongs to the universal ribosomal protein uL5 family. In terms of assembly, part of the 50S ribosomal subunit; part of the 5S rRNA/L5/L18/L25 subcomplex. Contacts the 5S rRNA and the P site tRNA. Forms a bridge to the 30S subunit in the 70S ribosome.

This is one of the proteins that bind and probably mediate the attachment of the 5S RNA into the large ribosomal subunit, where it forms part of the central protuberance. In the 70S ribosome it contacts protein S13 of the 30S subunit (bridge B1b), connecting the 2 subunits; this bridge is implicated in subunit movement. Contacts the P site tRNA; the 5S rRNA and some of its associated proteins might help stabilize positioning of ribosome-bound tRNAs. This chain is Large ribosomal subunit protein uL5, found in Desulfatibacillum aliphaticivorans.